A 326-amino-acid chain; its full sequence is Beta-1,3-galactosyltransferase 1 (326 aa).

At 1 to 6 (MASKVS) the chain is on the cytoplasmic side. A helical; Signal-anchor for type II membrane protein membrane pass occupies residues 7–26 (CLYVLTVVCWASALWYLSIT). Topologically, residues 27–326 (RPTSSYTGSK…DMSSKKHLRC (300 aa)) are lumenal. N-linked (GlcNAc...) asparagine glycans are attached at residues N47 and N151.

This sequence belongs to the glycosyltransferase 31 family. Mn(2+) serves as cofactor.

The protein localises to the golgi apparatus membrane. The enzyme catalyses an N-acetyl-beta-D-glucosaminyl derivative + UDP-alpha-D-galactose = a beta-D-galactosyl-(1-&gt;3)-N-acetyl-beta-D-glucosaminyl derivative + UDP + H(+). It carries out the reaction a beta-D-GlcNAc-(1-&gt;3)-beta-D-Gal-(1-&gt;4)-beta-D-Glc-(1&lt;-&gt;1)-Cer(d18:1(4E)) + UDP-alpha-D-galactose = a beta-D-Gal-(1-&gt;3)-beta-D-GlcNAc-(1-&gt;3)-beta-D-Gal-(1-&gt;4)-beta-D-Glc-(1&lt;-&gt;1')-Cer(d18:1(4E)) + UDP + H(+). It participates in protein modification; protein glycosylation. Functionally, beta-1,3-galactosyltransferase that transfers galactose from UDP-galactose to substrates with a terminal beta-N-acetylglucosamine (beta-GlcNAc) residue. Involved in the biosynthesis of the carbohydrate moieties of glycolipids and glycoproteins. The polypeptide is Beta-1,3-galactosyltransferase 1 (B3GALT1) (Gorilla gorilla gorilla (Western lowland gorilla)).